A 60-amino-acid polypeptide reads, in one-letter code: Large ribosomal subunit protein uL30 (60 aa).

This sequence belongs to the universal ribosomal protein uL30 family. In terms of assembly, part of the 50S ribosomal subunit.

This is Large ribosomal subunit protein uL30 from Bacillus cereus (strain G9842).